The following is a 181-amino-acid chain: MAQTGNFKSPARMSSLGQGAAPASAGAVTGGKPREEGLKGVDFERRGFLQKIVGGVGAVVAVSTLYPVVRYIVPPAKKIKIVNELAVGPASDVPNGTGKIYQFNDDKVIVVNHGGSLTAVSAICTHLGCLVHWDEAADMIACPCHGAKYTQDGKIISGPQPLPLKQYKVKIEDGKIVVSIA.

The interval 1–35 (MAQTGNFKSPARMSSLGQGAAPASAGAVTGGKPRE) is disordered. 2 helical membrane-spanning segments follow: residues 53–73 (VGGV…RYIV) and 114–134 (GGSL…VHWD). The 94-residue stretch at 85–178 (LAVGPASDVP…VKIEDGKIVV (94 aa)) folds into the Rieske domain. The [2Fe-2S] cluster site is built by Cys124, His126, Cys142, and His145. Cysteines 129 and 144 form a disulfide.

The protein belongs to the Rieske iron-sulfur protein family. [2Fe-2S] cluster serves as cofactor.

It localises to the cell inner membrane. The catalysed reaction is 2 oxidized [plastocyanin] + a plastoquinol + 2 H(+)(in) = 2 reduced [plastocyanin] + a plastoquinone + 4 H(+)(out). Functionally, component of the green S-bacteria bc-complex which consists of the Rieske protein and cytochrome b subunit and which appears to lack a cytochrome c1-equivalent. This complex has a comparatively low redox potential. The chain is Cytochrome b6-f complex iron-sulfur subunit (petC) from Chlorobaculum tepidum (strain ATCC 49652 / DSM 12025 / NBRC 103806 / TLS) (Chlorobium tepidum).